Consider the following 258-residue polypeptide: Cytosolic Fe-S cluster assembly factor Nubp2 homolog (258 aa).

Position 14-21 (14-21 (GKGGVGKS)) interacts with ATP. Positions 188 and 191 each coordinate [4Fe-4S] cluster.

This sequence belongs to the Mrp/NBP35 ATP-binding proteins family. NUBP2/CFD1 subfamily. Heterotetramer of 2 Nubp1 and 2 Nubp2 chains. The cofactor is [4Fe-4S] cluster.

The protein resides in the cytoplasm. Functionally, component of the cytosolic iron-sulfur (Fe/S) protein assembly (CIA) machinery. Required for maturation of extramitochondrial Fe-S proteins. The Nubp1-Nubp2 heterotetramer forms a Fe-S scaffold complex, mediating the de novo assembly of an Fe-S cluster and its transfer to target apoproteins. The protein is Cytosolic Fe-S cluster assembly factor Nubp2 homolog of Drosophila pseudoobscura pseudoobscura (Fruit fly).